A 117-amino-acid polypeptide reads, in one-letter code: Small ribosomal subunit protein bS6 (117 aa).

Belongs to the bacterial ribosomal protein bS6 family.

In terms of biological role, binds together with bS18 to 16S ribosomal RNA. This is Small ribosomal subunit protein bS6 from Trichodesmium erythraeum (strain IMS101).